Reading from the N-terminus, the 453-residue chain is Bifunctional protein GlmU (453 aa).

The tract at residues 1-227 (MTQLSVVILA…LMEVEGANNR (227 aa)) is pyrophosphorylase. UDP-N-acetyl-alpha-D-glucosamine is bound by residues 9-12 (LAAG), lysine 23, glutamine 74, 79-80 (GT), 101-103 (YGD), glycine 138, glutamate 152, asparagine 167, and asparagine 225. Residue aspartate 103 participates in Mg(2+) binding. Residue asparagine 225 participates in Mg(2+) binding. A linker region spans residues 228 to 248 (LQLAALERYYQKIQAEKLLLA). The tract at residues 249–453 (GVTIIDPARF…IQGWQRPTKK (205 aa)) is N-acetyltransferase. UDP-N-acetyl-alpha-D-glucosamine-binding residues include arginine 331 and lysine 349. Histidine 361 serves as the catalytic Proton acceptor. 2 residues coordinate UDP-N-acetyl-alpha-D-glucosamine: tyrosine 364 and asparagine 375. Acetyl-CoA is bound by residues alanine 378, 384-385 (NY), serine 403, alanine 421, and arginine 438.

This sequence in the N-terminal section; belongs to the N-acetylglucosamine-1-phosphate uridyltransferase family. In the C-terminal section; belongs to the transferase hexapeptide repeat family. As to quaternary structure, homotrimer. The cofactor is Mg(2+).

Its subcellular location is the cytoplasm. The catalysed reaction is alpha-D-glucosamine 1-phosphate + acetyl-CoA = N-acetyl-alpha-D-glucosamine 1-phosphate + CoA + H(+). It catalyses the reaction N-acetyl-alpha-D-glucosamine 1-phosphate + UTP + H(+) = UDP-N-acetyl-alpha-D-glucosamine + diphosphate. Its pathway is nucleotide-sugar biosynthesis; UDP-N-acetyl-alpha-D-glucosamine biosynthesis; N-acetyl-alpha-D-glucosamine 1-phosphate from alpha-D-glucosamine 6-phosphate (route II): step 2/2. It participates in nucleotide-sugar biosynthesis; UDP-N-acetyl-alpha-D-glucosamine biosynthesis; UDP-N-acetyl-alpha-D-glucosamine from N-acetyl-alpha-D-glucosamine 1-phosphate: step 1/1. It functions in the pathway bacterial outer membrane biogenesis; LPS lipid A biosynthesis. Functionally, catalyzes the last two sequential reactions in the de novo biosynthetic pathway for UDP-N-acetylglucosamine (UDP-GlcNAc). The C-terminal domain catalyzes the transfer of acetyl group from acetyl coenzyme A to glucosamine-1-phosphate (GlcN-1-P) to produce N-acetylglucosamine-1-phosphate (GlcNAc-1-P), which is converted into UDP-GlcNAc by the transfer of uridine 5-monophosphate (from uridine 5-triphosphate), a reaction catalyzed by the N-terminal domain. In Glaesserella parasuis serovar 5 (strain SH0165) (Haemophilus parasuis), this protein is Bifunctional protein GlmU.